The primary structure comprises 177 residues: Large ribosomal subunit protein uL6 (177 aa).

Belongs to the universal ribosomal protein uL6 family. As to quaternary structure, part of the 50S ribosomal subunit.

This protein binds to the 23S rRNA, and is important in its secondary structure. It is located near the subunit interface in the base of the L7/L12 stalk, and near the tRNA binding site of the peptidyltransferase center. This is Large ribosomal subunit protein uL6 from Pseudomonas syringae pv. tomato (strain ATCC BAA-871 / DC3000).